Reading from the N-terminus, the 89-residue chain is Small ribosomal subunit protein uS14A (89 aa).

Residues 29–62 are disordered; that stretch reads AAGDRTALAKLPRDSNPNRLRLRDQTDGRPRGYM. Basic and acidic residues predominate over residues 49 to 58; sequence RLRDQTDGRP.

This sequence belongs to the universal ribosomal protein uS14 family. As to quaternary structure, part of the 30S ribosomal subunit. Contacts proteins S3 and S10.

Its function is as follows. Binds 16S rRNA, required for the assembly of 30S particles and may also be responsible for determining the conformation of the 16S rRNA at the A site. This chain is Small ribosomal subunit protein uS14A, found in Enterococcus faecalis (strain ATCC 700802 / V583).